The chain runs to 152 residues: NAD(P)H-quinone oxidoreductase subunit N (152 aa).

It belongs to the complex I NdhN subunit family. NDH-1 can be composed of about 15 different subunits; different subcomplexes with different compositions have been identified which probably have different functions.

It is found in the cellular thylakoid membrane. It catalyses the reaction a plastoquinone + NADH + (n+1) H(+)(in) = a plastoquinol + NAD(+) + n H(+)(out). The catalysed reaction is a plastoquinone + NADPH + (n+1) H(+)(in) = a plastoquinol + NADP(+) + n H(+)(out). NDH-1 shuttles electrons from an unknown electron donor, via FMN and iron-sulfur (Fe-S) centers, to quinones in the respiratory and/or the photosynthetic chain. The immediate electron acceptor for the enzyme in this species is believed to be plastoquinone. Couples the redox reaction to proton translocation, and thus conserves the redox energy in a proton gradient. Cyanobacterial NDH-1 also plays a role in inorganic carbon-concentration. In Prochlorococcus marinus (strain SARG / CCMP1375 / SS120), this protein is NAD(P)H-quinone oxidoreductase subunit N.